Reading from the N-terminus, the 443-residue chain is Histone deacetylase 10, chloroplastic (443 aa).

A chloroplast-targeting transit peptide spans 1–65 (MEQLWVPSLP…PSHNGTSISD (65 aa)). The histone deacetylase stretch occupies residues 82–412 (DAHILYCTSP…FRAFLGEPSL (331 aa)). His-222 functions as the Proton donor/acceptor in the catalytic mechanism. Asp-259, His-261, and Asp-346 together coordinate Zn(2+).

This sequence belongs to the histone deacetylase family. Requires Zn(2+) as cofactor. In terms of tissue distribution, expressed in leaves. Expressed in coleoptiles, leaves, flag leaves and flowers. Expressed at low levels in roots.

It localises to the plastid. Its subcellular location is the chloroplast. It is found in the mitochondrion. The catalysed reaction is N-acetylserotonin + H2O = serotonin + acetate. It carries out the reaction N-acetyltyramine + H2O = tyramine + acetate. It catalyses the reaction N-acetyltryptamine + H2O = tryptamine + acetate. The enzyme catalyses melatonin + H2O = 5-methoxytryptamine + acetate. Its activity is regulated as follows. The activity of this enzyme is not inhibited by butyrate, a well-known histone deacetylase inhibitor. Involved in the regulation of melatonin biosynthesis by catalyzing the deacetylation of N-acetylserotonin to produce serotonin. N-acetylserotonin is methylated by acetylserotonin O-methyltransferase (ASMT) to produce melatonin (N-acetyl-5-methoxytryptamine). Deacetylates melatonin to produce 5-methoxytryptamine. In vitro, deacetylates N-acetyltyramine and N-acetyltryptamine to produce tyramine and tryptamine, respectively. In Oryza sativa subsp. japonica (Rice), this protein is Histone deacetylase 10, chloroplastic.